A 443-amino-acid chain; its full sequence is Probable D-serine dehydratase (443 aa).

Lys116 carries the N6-(pyridoxal phosphate)lysine modification.

The protein belongs to the serine/threonine dehydratase family. DsdA subfamily. Requires pyridoxal 5'-phosphate as cofactor.

It catalyses the reaction D-serine = pyruvate + NH4(+). This chain is Probable D-serine dehydratase, found in Bacillus cereus (strain ATCC 14579 / DSM 31 / CCUG 7414 / JCM 2152 / NBRC 15305 / NCIMB 9373 / NCTC 2599 / NRRL B-3711).